Consider the following 639-residue polypeptide: MKIINLGILAHVDAGKTTLTESLLYTSGAIAEPGSVDKGTTRTDTMNLERQRGITIQTAVTSFQWEDVKVNIIDTPGHMDFLAEVYRSLSVLDGAVLLVSAKDGIQAQTRILFHALQTMKIPTIFFINKIDQEGIDLPMVYQEMKAKLSSEIIVKQKVGQHPHINVTDNDDMEQWDAVIMGNDELLEKYMSGKPFKMSELEQEENRRFQNGTLFPVYHGSAKNNLGIRQLIEVIASKFYSSTPEGQSELCGQVFKIEYSEKRRRFVYVRIYSGTLHLRDVIKISEKEKIKITEMCVPTNGELYSSDTACSGDIVILPNDVLQLNSILGNEMLLPQRKFIENPLPMLQTTIAVKKSEQREILLGALTEISDGDPLLKYYVDTTTHEIILSFLGNVQMEVICAILEEKYHVEAEIKEPTVIYMERPLRKAEYTIHIEVPPNPFWASVGLSIEPLPIGSGVQYESRVSLGYLNQSFQNAVMEGVLYGCEQGLYGWKVTDCKICFEYGLYYSPVSTPADFRLLSPIVLEQALKKAGTELLEPYLHFEIYAPQEYLSRAYHDAPRYCADIVSTQVKNDEVILKGEIPARCIQEYRNDLTYFTNGQGVCLTELKGYQPAIGKFICQPRRPNSRIDKVRHMFHKLA.

A tr-type G domain is found at 1–244 (MKIINLGILA…ASKFYSSTPE (244 aa)). GTP-binding positions include 10–17 (AHVDAGKT), 74–78 (DTPGH), and 128–131 (NKID).

It belongs to the TRAFAC class translation factor GTPase superfamily. Classic translation factor GTPase family. TetM/TetO subfamily.

Its function is as follows. Abolishes the inhibitory effect of tetracyclin on protein synthesis by a non-covalent modification of the ribosomes. The protein is Tetracycline resistance protein TetO (tetO) of Streptococcus pneumoniae.